The chain runs to 460 residues: NADH-ubiquinone oxidoreductase chain 4 (460 aa).

13 helical membrane-spanning segments follow: residues 20-42 (AKWL…LSWL), 61-81 (PLST…ILAS), 94-113 (RAYI…AFGA), 117-139 (IMFY…RWGN), 148-168 (TYFL…LLLM), 195-215 (LWWA…GVHL), 225-245 (PIAG…YGMM), 258-278 (LAYP…SICL), 285-304 (SLIA…GILI), 308-330 (WGFT…LFCL), 351-371 (MILP…LALP), 394-414 (LILT…LFLM), and 436-456 (LLII…ELMW).

Belongs to the complex I subunit 4 family.

The protein localises to the mitochondrion membrane. The catalysed reaction is a ubiquinone + NADH + 5 H(+)(in) = a ubiquinol + NAD(+) + 4 H(+)(out). In terms of biological role, core subunit of the mitochondrial membrane respiratory chain NADH dehydrogenase (Complex I) that is believed to belong to the minimal assembly required for catalysis. Complex I functions in the transfer of electrons from NADH to the respiratory chain. The immediate electron acceptor for the enzyme is believed to be ubiquinone. The sequence is that of NADH-ubiquinone oxidoreductase chain 4 (MT-ND4) from Oncorhynchus mykiss (Rainbow trout).